Reading from the N-terminus, the 873-residue chain is Tyrosine-protein kinase transforming protein Fps (873 aa).

The tract at residues 1-46 (ASGQLHRPQPQEHTSTSAAAGTWRLTQASESRHRLPHCSAAPSHQD) is disordered. Polar residues predominate over residues 11 to 29 (QEHTSTSAAAGTWRLTQAS). Positions 50-313 (MGFGPELWCP…AVEMIDPATE (264 aa)) constitute an F-BAR domain. Residues 445–471 (GSEEPPPALPLQEDRQSARSTDQERSG) are disordered. Basic and acidic residues predominate over residues 456–469 (QEDRQSARSTDQER). The region spanning 511-600 (WYHGAIPRSE…KSGIVLTRAV (90 aa)) is the SH2 domain. One can recognise a Protein kinase domain in the interval 612–865 (VLLGERIGRG…PSFGAVHQDL (254 aa)). ATP contacts are provided by residues 618-626 (IGRGNFGEV) and Lys-641. Asp-734 (proton acceptor) is an active-site residue. Tyr-764 carries the phosphotyrosine; by autocatalysis modification.

It belongs to the protein kinase superfamily. Tyr protein kinase family. Fes/fps subfamily.

It catalyses the reaction L-tyrosyl-[protein] + ATP = O-phospho-L-tyrosyl-[protein] + ADP + H(+). This is Tyrosine-protein kinase transforming protein Fps (V-FPS) from Gallus gallus (Chicken).